The primary structure comprises 386 residues: ADP,ATP carrier protein, mitochondrial (386 aa).

A mitochondrion-targeting transit peptide spans Met1–Ala77. Solcar repeat units follow at residues Ala84–Leu177, Lys189–Val281, and Asp289–Leu375. Helical transmembrane passes span Phe86 to Leu113, Thr154 to Phe178, Tyr187 to Phe207, Phe257 to Leu278, and Phe292 to Ile312. ADP-binding residues include Arg159 and Lys171. Residue Arg316 participates in ADP binding. The tract at residues Arg316 to Met321 is important for transport activity. Positions Arg316 to Met321 match the Nucleotide carrier signature motif motif. A helical membrane pass occupies residues Ala352–Leu372.

It belongs to the mitochondrial carrier (TC 2.A.29) family. Monomer.

The protein localises to the mitochondrion inner membrane. The enzyme catalyses ADP(in) + ATP(out) = ADP(out) + ATP(in). With respect to regulation, the matrix-open state (m-state) is inhibited by the membrane-permeable bongkrekic acid (BKA). The cytoplasmic-open state (c-state) is inhibited by the membrane-impermeable toxic inhibitor carboxyatractyloside (CATR). In terms of biological role, ADP:ATP antiporter that mediates import of ADP into the mitochondrial matrix for ATP synthesis, and export of ATP out to fuel the cell. Cycles between the cytoplasmic-open state (c-state) and the matrix-open state (m-state): operates by the alternating access mechanism with a single substrate-binding site intermittently exposed to either the cytosolic (c-state) or matrix (m-state) side of the inner mitochondrial membrane. The protein is ADP,ATP carrier protein, mitochondrial (ANT) of Solanum tuberosum (Potato).